A 466-amino-acid polypeptide reads, in one-letter code: 23S rRNA (uracil(1939)-C(5))-methyltransferase RlmD (466 aa).

One can recognise a TRAM domain in the interval 11-69; that stretch reads KITDTKHKEIVINRLDHLGAGIGHLNNKSIFVDGLLPGEKALVQITDDKKQYARAKVIK. The [4Fe-4S] cluster site is built by Cys-82, Cys-88, Cys-91, and Cys-184. Positions 287, 316, 321, 337, 364, and 385 each coordinate S-adenosyl-L-methionine. Catalysis depends on Cys-411, which acts as the Nucleophile.

The protein belongs to the class I-like SAM-binding methyltransferase superfamily. RNA M5U methyltransferase family. RlmD subfamily.

It catalyses the reaction uridine(1939) in 23S rRNA + S-adenosyl-L-methionine = 5-methyluridine(1939) in 23S rRNA + S-adenosyl-L-homocysteine + H(+). In terms of biological role, catalyzes the formation of 5-methyl-uridine at position 1939 (m5U1939) in 23S rRNA. The chain is 23S rRNA (uracil(1939)-C(5))-methyltransferase RlmD from Photobacterium profundum (strain SS9).